Here is a 199-residue protein sequence, read N- to C-terminus: NADH-quinone oxidoreductase subunit C (199 aa).

Belongs to the complex I 30 kDa subunit family. As to quaternary structure, NDH-1 is composed of 14 different subunits. Subunits NuoB, C, D, E, F, and G constitute the peripheral sector of the complex.

The protein localises to the cell inner membrane. It carries out the reaction a quinone + NADH + 5 H(+)(in) = a quinol + NAD(+) + 4 H(+)(out). Its function is as follows. NDH-1 shuttles electrons from NADH, via FMN and iron-sulfur (Fe-S) centers, to quinones in the respiratory chain. The immediate electron acceptor for the enzyme in this species is believed to be ubiquinone. Couples the redox reaction to proton translocation (for every two electrons transferred, four hydrogen ions are translocated across the cytoplasmic membrane), and thus conserves the redox energy in a proton gradient. This chain is NADH-quinone oxidoreductase subunit C, found in Polynucleobacter necessarius subsp. necessarius (strain STIR1).